The primary structure comprises 220 residues: Large ribosomal subunit protein uL3 (220 aa).

This sequence belongs to the universal ribosomal protein uL3 family. In terms of assembly, part of the 50S ribosomal subunit. Forms a cluster with proteins L14 and L19.

In terms of biological role, one of the primary rRNA binding proteins, it binds directly near the 3'-end of the 23S rRNA, where it nucleates assembly of the 50S subunit. The sequence is that of Large ribosomal subunit protein uL3 from Staphylococcus carnosus (strain TM300).